The following is a 98-amino-acid chain: Small ribosomal subunit protein bS6 (98 aa).

It belongs to the bacterial ribosomal protein bS6 family.

Functionally, binds together with bS18 to 16S ribosomal RNA. This chain is Small ribosomal subunit protein bS6, found in Lacticaseibacillus paracasei (strain ATCC 334 / BCRC 17002 / CCUG 31169 / CIP 107868 / KCTC 3260 / NRRL B-441) (Lactobacillus paracasei).